The primary structure comprises 419 residues: Creatine kinase S-type, mitochondrial (419 aa).

The N-terminal 39 residues, 1-39 (MASIFSKLLTGRNASLLFATMGTSVLTTGYLLNRQKVCA), are a transit peptide targeting the mitochondrion. A cardiolipin-binding region spans residues 40–64 (EVREQPRLFPPSADYPDLRKHNNCM). In terms of domain architecture, Phosphagen kinase N-terminal spans 46–132 (RLFPPSADYP…FDPVIKLRHN (87 aa)). The region spanning 159 to 401 (YVLSSRVRTG…NYLVDCEKKL (243 aa)) is the Phosphagen kinase C-terminal domain. ATP is bound by residues 162–166 (SSRVR) and His-225. Residue Tyr-255 is modified to Phosphotyrosine. ATP-binding positions include Arg-270, Arg-326, 354 to 359 (RGTGGV), and Asp-369. Thr-356 bears the Phosphothreonine mark.

The protein belongs to the ATP:guanido phosphotransferase family. In terms of assembly, exists as an octamer composed of four CKMT2 homodimers. As to expression, sarcomere-specific. Found only in heart and skeletal muscles.

The protein resides in the mitochondrion inner membrane. It carries out the reaction creatine + ATP = N-phosphocreatine + ADP + H(+). Functionally, reversibly catalyzes the transfer of phosphate between ATP and various phosphogens (e.g. creatine phosphate). Creatine kinase isoenzymes play a central role in energy transduction in tissues with large, fluctuating energy demands, such as skeletal muscle, heart, brain and spermatozoa. This is Creatine kinase S-type, mitochondrial (CKMT2) from Homo sapiens (Human).